The chain runs to 64 residues: Lantibiotic actagardine (64 aa).

A propeptide spanning residues 1–45 (MSALAIEKSWKDVDLRDGATSHPAGLGFGELTFEDLREDRTIYAA) is cleaved from the precursor. The segment at residues 46-51 (SSGWVC) is a cross-link (lanthionine (Ser-Cys)). Cross-links (beta-methyllanthionine (Thr-Cys)) lie at residues 52-57 (TLTIEC) and 54-62 (TIECGTVIC). Residues 59–64 (TVICAC) constitute a cross-link (beta-methyllanthionine sulfoxide (Thr-Cys)).

Belongs to the type B lantibiotic family. In terms of processing, maturation of lantibiotics involves the enzymatic conversion of Thr, and Ser into dehydrated AA by the enzyme garM and the formation of thioether bonds with cysteine. The 59-64 beta-methyllanthionine thioether bond is oxidized to a sulfoxide by the monooxygenase GarO. This is followed by membrane translocation and cleavage of the modified precursor. Post-translationally, the sulfoxide group of the 59-64 beta-methyllanthionine thioether bond is mildly important for activity, since the antibacterial activity of deoxyactagardine is marginally lower compared with oxidized actagardine.

Has potent antibacterial activity against some Gram-positive bacteria. Has good antistreptococcal activity. Inhibits cell wall biosynthesis by binding to lipid II and blocking transglycosylation. This chain is Lantibiotic actagardine, found in Actinoplanes garbadinensis.